Consider the following 500-residue polypeptide: L-arabinose isomerase (500 aa).

Glu306, Glu333, His350, and His450 together coordinate Mn(2+).

This sequence belongs to the arabinose isomerase family. As to quaternary structure, homohexamer. It depends on Mn(2+) as a cofactor.

It carries out the reaction beta-L-arabinopyranose = L-ribulose. The protein operates within carbohydrate degradation; L-arabinose degradation via L-ribulose; D-xylulose 5-phosphate from L-arabinose (bacterial route): step 1/3. In terms of biological role, catalyzes the conversion of L-arabinose to L-ribulose. The polypeptide is L-arabinose isomerase (Escherichia coli O157:H7).